Here is a 178-residue protein sequence, read N- to C-terminus: Orotate phosphoribosyltransferase (178 aa).

Residues arginine 92, lysine 93, lysine 96, and 118 to 126 (EDVTTTGGS) each bind 5-phospho-alpha-D-ribose 1-diphosphate. Residues threonine 122 and arginine 150 each contribute to the orotate site.

Belongs to the purine/pyrimidine phosphoribosyltransferase family. PyrE subfamily. As to quaternary structure, homodimer. It depends on Mg(2+) as a cofactor.

It catalyses the reaction orotidine 5'-phosphate + diphosphate = orotate + 5-phospho-alpha-D-ribose 1-diphosphate. Its pathway is pyrimidine metabolism; UMP biosynthesis via de novo pathway; UMP from orotate: step 1/2. Functionally, catalyzes the transfer of a ribosyl phosphate group from 5-phosphoribose 1-diphosphate to orotate, leading to the formation of orotidine monophosphate (OMP). In Methanosphaera stadtmanae (strain ATCC 43021 / DSM 3091 / JCM 11832 / MCB-3), this protein is Orotate phosphoribosyltransferase.